Consider the following 97-residue polypeptide: Small integral membrane protein 8 (97 aa).

Positions 1–24 are disordered; sequence MSSAPEPPTFKKEPPKEKEFQSPG. Basic and acidic residues predominate over residues 9 to 20; sequence TFKKEPPKEKEF. A helical membrane pass occupies residues 48–70; that stretch reads PVMAFGLVTLSLCVAYIGYLHAI.

The protein belongs to the SMIM8 family.

It localises to the membrane. This chain is Small integral membrane protein 8 (SMIM8), found in Homo sapiens (Human).